Here is a 411-residue protein sequence, read N- to C-terminus: Keratin, type I cytoskeletal 12 (411 aa).

Residues 1–42 (DHDYEFPGIQAFAGLGMGFGGSPGGGSLYLPSGNDGGLLSGS) form a head region. The tract at residues 43–78 (EKETMQNLNDRLASYLDKVRALEDANAELENKIREW) is coil 1A. The region spanning 43–359 (EKETMQNLND…RLLDGEAQGD (317 aa)) is the IF rod domain. The segment at 83-101 (GHGHGDCGPQHDYSKYHPL) is linker 1. The interval 102–193 (IEDLRNKIIS…KNHEEELQSC (92 aa)) is coil 1B. The interval 194–216 (RAGGPGEVSVEMDAAPGVDLTRL) is linker 12. The coil 2 stretch occupies residues 217–354 (LNDMRAQYEA…IETYRRLLDG (138 aa)). A tail region spans residues 355–411 (EAQGDGLDESSAMTGSRSQAQSIDSSKDPSKTRKIKTIVQEVVNGEVVSSQVQEIQN). The segment at 356–387 (AQGDGLDESSAMTGSRSQAQSIDSSKDPSKTR) is disordered. Positions 365–378 (SAMTGSRSQAQSID) are enriched in polar residues.

This sequence belongs to the intermediate filament family. Heterotetramer of two type I and two type II keratins. Keratin-3 associates with keratin-12. In terms of tissue distribution, cornea specific. Associated mainly with all layers of the central corneal epithelium and also found in the suprabasal limbal epithelium.

Involved in corneal epithelium organization, integrity and corneal keratin expression. The protein is Keratin, type I cytoskeletal 12 (KRT12) of Oryctolagus cuniculus (Rabbit).